We begin with the raw amino-acid sequence, 446 residues long: Chromosomal replication initiator protein DnaA (446 aa).

The interval 1–92 (MENISDLWNS…SQAEEEIDLP (92 aa)) is domain I, interacts with DnaA modulators. The segment at 87 to 107 (EEIDLPPSKPNSAQDDSNHLP) is disordered. Positions 93-109 (PSKPNSAQDDSNHLPQS) are domain II. Positions 96-107 (PNSAQDDSNHLP) are enriched in polar residues. The domain III, AAA+ region stretch occupies residues 110 to 326 (MLNPKYTFDT…GALIRVVAYS (217 aa)). ATP-binding residues include glycine 154, glycine 156, lysine 157, and threonine 158. The tract at residues 327-446 (SLINKDINAD…QVEEINDILK (120 aa)) is domain IV, binds dsDNA.

It belongs to the DnaA family. Oligomerizes as a right-handed, spiral filament on DNA at oriC.

The protein localises to the cytoplasm. Its function is as follows. Plays an essential role in the initiation and regulation of chromosomal replication. ATP-DnaA binds to the origin of replication (oriC) to initiate formation of the DNA replication initiation complex once per cell cycle. Binds the DnaA box (a 9 base pair repeat at the origin) and separates the double-stranded (ds)DNA. Forms a right-handed helical filament on oriC DNA; dsDNA binds to the exterior of the filament while single-stranded (ss)DNA is stabiized in the filament's interior. The ATP-DnaA-oriC complex binds and stabilizes one strand of the AT-rich DNA unwinding element (DUE), permitting loading of DNA polymerase. After initiation quickly degrades to an ADP-DnaA complex that is not apt for DNA replication. Binds acidic phospholipids. The sequence is that of Chromosomal replication initiator protein DnaA from Bacillus cereus (strain ATCC 10987 / NRS 248).